Consider the following 420-residue polypeptide: Phospholipase A1-II 3 (420 aa).

A signal peptide spans Met-1–Ala-21. A glycan (N-linked (GlcNAc...) asparagine) is linked at Asn-231. Ser-240 (acyl-ester intermediate) is an active-site residue. Residue Ser-240 is the Charge relay system of the active site. N-linked (GlcNAc...) asparagine glycosylation is present at Asn-294. Catalysis depends on charge relay system residues Asp-305 and His-343. A coiled-coil region spans residues Val-367–Val-388. The N-linked (GlcNAc...) asparagine glycan is linked to Asn-403.

The protein belongs to the AB hydrolase superfamily. Lipase family.

It is found in the secreted. Its function is as follows. Acylhydrolase that catalyzes the hydrolysis of phospholipids at the sn-1 position. This is Phospholipase A1-II 3 from Oryza sativa subsp. japonica (Rice).